The primary structure comprises 379 residues: Succinyl-diaminopimelate desuccinylase (379 aa).

Residue His70 participates in Zn(2+) binding. Asp72 is an active-site residue. Asp103 contacts Zn(2+). Glu137 serves as the catalytic Proton acceptor. Zn(2+)-binding residues include Glu138, Glu166, and His352.

It belongs to the peptidase M20A family. DapE subfamily. As to quaternary structure, homodimer. The cofactor is Zn(2+). Co(2+) is required as a cofactor.

The catalysed reaction is N-succinyl-(2S,6S)-2,6-diaminopimelate + H2O = (2S,6S)-2,6-diaminopimelate + succinate. The protein operates within amino-acid biosynthesis; L-lysine biosynthesis via DAP pathway; LL-2,6-diaminopimelate from (S)-tetrahydrodipicolinate (succinylase route): step 3/3. Catalyzes the hydrolysis of N-succinyl-L,L-diaminopimelic acid (SDAP), forming succinate and LL-2,6-diaminopimelate (DAP), an intermediate involved in the bacterial biosynthesis of lysine and meso-diaminopimelic acid, an essential component of bacterial cell walls. The polypeptide is Succinyl-diaminopimelate desuccinylase (Shewanella putrefaciens (strain CN-32 / ATCC BAA-453)).